The chain runs to 400 residues: S-adenosylmethionine synthase (400 aa).

An ATP-binding site is contributed by 137–142 (GEGSGD).

This sequence belongs to the AdoMet synthase 2 family. It depends on Mg(2+) as a cofactor.

The catalysed reaction is L-methionine + ATP + H2O = S-adenosyl-L-methionine + phosphate + diphosphate. It participates in amino-acid biosynthesis; S-adenosyl-L-methionine biosynthesis; S-adenosyl-L-methionine from L-methionine: step 1/1. Catalyzes the formation of S-adenosylmethionine from methionine and ATP. This is S-adenosylmethionine synthase from Haloarcula marismortui (strain ATCC 43049 / DSM 3752 / JCM 8966 / VKM B-1809) (Halobacterium marismortui).